The sequence spans 550 residues: Forkhead box protein N4 (550 aa).

Residues 231 to 327 (KPIYSYSCLI…EEMQKWKRKD (97 aa)) constitute a DNA-binding region (fork-head). The segment covering 402 to 411 (LQNQSRLAPS) has biased composition (low complexity). The interval 402–437 (LQNQSRLAPSSPAPAQTPPLHTVPDMTNSSLPQHPA) is disordered.

Isoform 1 is expressed mainly in adult thymus. Isoform 2 is detected in adult skin. Isoform 3 is expressed in adult brain and embryo. Prominent expression sites include the olfactory placode, the basal layer of the olfactory epithelium, the neuroepithelium of the developing retina, the germinal zone of the differentiated eye, regions of motoneuron development in the neural tube and periventricular regions of the brain.

It is found in the nucleus. Its function is as follows. Transcription factor essential for neural and some non-neural tissues development. Binds to an 11-bp consensus sequence containing the invariant tetranucleotide 5'-ACGC-3'. During development of the central nervous system, required to specify the amacrine and horizontal cell fates from multipotent retinal progenitors while suppressing the alternative photoreceptor cell fates. Drives commitment of p2 progenitors to the V2b interneuron fates during spinal cord neurogenesis. In development of non-neural tissues, plays an essential role in the specification of the atrioventricular canal. This Danio rerio (Zebrafish) protein is Forkhead box protein N4 (foxn4).